The chain runs to 931 residues: Synaptopodin (931 aa).

Disordered stretches follow at residues Glu-56–Ile-78 and Ala-113–Tyr-243. Ser-134 bears the Phosphoserine mark. The segment covering Thr-136–Gln-148 has biased composition (basic and acidic residues). Composition is skewed to polar residues over residues Gln-153–Gly-164 and Pro-188–Pro-200. A phosphoserine mark is found at Ser-202, Ser-222, and Ser-258. Residues Pro-214–Ser-232 are compositionally biased toward low complexity. Residues Gly-280 to Leu-420 are disordered. Composition is skewed to polar residues over residues His-282–Ser-293 and Ile-309–Ser-370. Residues Asp-373–Arg-384 are compositionally biased toward basic and acidic residues. Phosphoserine occurs at positions 490 and 514. Disordered stretches follow at residues Arg-542 to Val-591 and Ser-691 to Gly-711. Position 549 is a phosphothreonine (Thr-549). The short motif at Pro-551–Tyr-554 is the PPxY motif element. Positions Glu-556–Arg-568 are enriched in polar residues. Ser-569 carries the phosphoserine modification. Over residues Ser-569–Ser-580 the composition is skewed to low complexity. Positions Pro-570–Tyr-573 match the PPxY motif motif. A phosphoserine mark is found at Ser-691, Ser-742, Ser-746, and Ser-767. Thr-771 is modified (phosphothreonine). Residues Ser-775–Gly-918 are disordered. Over residues Ser-816–Ser-841 the composition is skewed to low complexity. Ser-835 is modified (phosphoserine). Position 850 is an omega-N-methylarginine (Arg-850). Ser-856 is modified (phosphoserine). Polar residues predominate over residues Val-874–Ser-895.

This sequence belongs to the synaptopodin family. As to quaternary structure, interacts with BAIAP1. Interacts with actin. Interacts (via PPxY motifs) with WWC1 (via WW domains). In terms of processing, O-glycosylated. As to expression, expressed at high levels in brain and at moderate, but still significant levels in the heart, skeletal muscle, lung and kidney. In brain, expressed in the cerebral cortex, hippocampus, olfactory bulb and striatum.

The protein localises to the cytoplasm. It is found in the cytoskeleton. The protein resides in the cell junction. Its subcellular location is the tight junction. It localises to the perikaryon. The protein localises to the cell projection. It is found in the dendritic spine. The protein resides in the postsynaptic density. Its subcellular location is the synapse. It localises to the cytosol. Actin-associated protein that may play a role in modulating actin-based shape and motility of dendritic spines and renal podocyte foot processes. Seems to be essential for the formation of spine apparatuses in spines of telencephalic neurons, which is involved in synaptic plasticity. In Rattus norvegicus (Rat), this protein is Synaptopodin (Synpo).